The primary structure comprises 259 residues: Small ribosomal subunit protein eS4 (259 aa).

Residues 41–105 enclose the S4 RNA-binding domain; that stretch reads LPLSVLLKER…TDQSFRILYD (65 aa). Position 248 is a phosphothreonine (Thr248). A Phosphoserine modification is found at Ser258.

This sequence belongs to the eukaryotic ribosomal protein eS4 family.

The polypeptide is Small ribosomal subunit protein eS4 (Tetrahymena thermophila).